Here is a 150-residue protein sequence, read N- to C-terminus: Large ribosomal subunit protein uL15 (150 aa).

The disordered stretch occupies residues 1–55 (MADNEILQMHDLKPAPGAKKDRTRVGRGEGSKGKTAGRGAKGQTKRNHVRPGFEG). The span at 8-32 (QMHDLKPAPGAKKDRTRVGRGEGSK) shows a compositional bias: basic and acidic residues.

It belongs to the universal ribosomal protein uL15 family. As to quaternary structure, part of the 50S ribosomal subunit.

In terms of biological role, binds to the 23S rRNA. The polypeptide is Large ribosomal subunit protein uL15 (Bifidobacterium longum (strain DJO10A)).